We begin with the raw amino-acid sequence, 86 residues long: MTVKVHVVYCGGUGYRPKFIKLKTLLEDEFPNELEITGEGTPSTTGWLEVEVNGKLVHSKKNGDGFVDSDSKMQKIMTAIEQAMGK.

Positions Cys-10–Sec-13 form a cross-link, cysteinyl-selenocysteine (Cys-Sec); redox-active. Position 13 (Sec-13) is a non-standard amino acid, selenocysteine.

This sequence belongs to the SelWTH family. Selenoprotein W subfamily.

It localises to the cytoplasm. In terms of biological role, plays a role as a glutathione (GSH)-dependent antioxidant. May be involved in a redox-related process. May play a role in the myopathies of selenium deficiency. The polypeptide is Selenoprotein W (Danio rerio (Zebrafish)).